A 596-amino-acid polypeptide reads, in one-letter code: Transketolase-like protein 1 (596 aa).

H46 contributes to the substrate binding site. Thiamine diphosphate contacts are provided by residues S49 and 94 to 96 (GWL). D126 provides a ligand contact to Mg(2+). Residues V127 and N156 each contribute to the thiamine diphosphate site. N156 and L158 together coordinate Mg(2+). Residues K218 and H232 each coordinate thiamine diphosphate. The substrate site is built by H232, R292, and S319. The thiamine diphosphate site is built by E340 and F366. E340 functions as the Proton donor in the catalytic mechanism. Residues H390 and D398 each coordinate substrate. Q402 contributes to the thiamine diphosphate binding site. A substrate-binding site is contributed by R448.

Belongs to the transketolase family. In terms of assembly, homodimer. Requires Mg(2+) as cofactor. It depends on Ca(2+) as a cofactor. The cofactor is Mn(2+). Co(2+) is required as a cofactor. Thiamine diphosphate serves as cofactor.

The protein resides in the cytoplasm. It catalyses the reaction D-sedoheptulose 7-phosphate + D-glyceraldehyde 3-phosphate = aldehydo-D-ribose 5-phosphate + D-xylulose 5-phosphate. Functionally, catalyzes the transfer of a two-carbon ketol group from a ketose donor to an aldose acceptor, via a covalent intermediate with the cofactor thiamine pyrophosphate. The polypeptide is Transketolase-like protein 1 (TKTL1) (Bos taurus (Bovine)).